The following is a 541-amino-acid chain: Calcium-dependent protein kinase 25 (541 aa).

Positions 1-11 (MGQCCTGGGKA) are enriched in gly residues. Positions 1–74 (MGQCCTGGGK…AGPIGEVLER (74 aa)) are disordered. Gly2 carries N-myristoyl glycine lipidation. Over residues 38–67 (AKQQPCSPAAKAAATEAAAAASSSKKPAGP) the composition is skewed to low complexity. Residues 83–341 (YSIGKELGRG…AFQVLNHPWI (259 aa)) enclose the Protein kinase domain. ATP contacts are provided by residues 89-97 (LGRGQFGVT) and Lys112. Residue Asp207 is the Proton acceptor of the active site. Residues 347–377 (APDVPLDNVVLNRLKQFRAMNQFKKAALRII) form an autoinhibitory domain region. EF-hand domains follow at residues 384 to 419 (EEIK…QGTK), 420 to 455 (FSDN…MNKM), 456 to 491 (DREE…QGLY), and 493 to 526 (ANEI…GSGC). The Ca(2+) site is built by Asp397, Asp399, Ser401, Thr403, Glu408, Asp433, Asp435, Asn437, Glu444, Asp469, Asp471, Ser473, Tyr475, Glu480, Asp504, Asn506, Asp508, Arg510, and Glu515.

This sequence belongs to the protein kinase superfamily. Ser/Thr protein kinase family. CDPK subfamily. As to expression, specifically expressed in heading panicles, spikelets and mature pollen grains. Not expressed in vegetative tissues.

Its subcellular location is the membrane. It catalyses the reaction L-seryl-[protein] + ATP = O-phospho-L-seryl-[protein] + ADP + H(+). The enzyme catalyses L-threonyl-[protein] + ATP = O-phospho-L-threonyl-[protein] + ADP + H(+). With respect to regulation, activated by calcium. Autophosphorylation may play an important role in the regulation of the kinase activity. Functionally, may play a role in signal transduction pathways that involve calcium as a second messenger. In Oryza sativa subsp. japonica (Rice), this protein is Calcium-dependent protein kinase 25.